The following is a 168-amino-acid chain: tRNA-splicing endonuclease (168 aa).

Catalysis depends on residues tyrosine 107, histidine 114, and lysine 145.

This sequence belongs to the tRNA-intron endonuclease family. Archaeal short subfamily. As to quaternary structure, homotetramer; although the tetramer contains four active sites, only two participate in the cleavage. Therefore, it should be considered as a dimer of dimers.

It carries out the reaction pretRNA = a 3'-half-tRNA molecule with a 5'-OH end + a 5'-half-tRNA molecule with a 2',3'-cyclic phosphate end + an intron with a 2',3'-cyclic phosphate and a 5'-hydroxyl terminus.. Its function is as follows. Endonuclease that removes tRNA introns. Cleaves pre-tRNA at the 5'- and 3'-splice sites to release the intron. The products are an intron and two tRNA half-molecules bearing 2',3' cyclic phosphate and 5'-OH termini. Recognizes a pseudosymmetric substrate in which 2 bulged loops of 3 bases are separated by a stem of 4 bp. The sequence is that of tRNA-splicing endonuclease from Thermococcus gammatolerans (strain DSM 15229 / JCM 11827 / EJ3).